A 223-amino-acid polypeptide reads, in one-letter code: Urease accessory protein UreF (223 aa).

This sequence belongs to the UreF family. As to quaternary structure, ureD, UreF and UreG form a complex that acts as a GTP-hydrolysis-dependent molecular chaperone, activating the urease apoprotein by helping to assemble the nickel containing metallocenter of UreC. The UreE protein probably delivers the nickel.

It is found in the cytoplasm. Required for maturation of urease via the functional incorporation of the urease nickel metallocenter. This Rhizobium etli (strain ATCC 51251 / DSM 11541 / JCM 21823 / NBRC 15573 / CFN 42) protein is Urease accessory protein UreF.